The chain runs to 364 residues: tRNA 2-selenouridine synthase (364 aa).

The 123-residue stretch at 14–136 folds into the Rhodanese domain; the sequence is VLNNTPLIDV…AFRNWLMQET (123 aa). Cysteine 97 (S-selanylcysteine intermediate) is an active-site residue.

This sequence belongs to the SelU family. As to quaternary structure, monomer.

The catalysed reaction is 5-methylaminomethyl-2-thiouridine(34) in tRNA + selenophosphate + (2E)-geranyl diphosphate + H2O + H(+) = 5-methylaminomethyl-2-selenouridine(34) in tRNA + (2E)-thiogeraniol + phosphate + diphosphate. The enzyme catalyses 5-methylaminomethyl-2-thiouridine(34) in tRNA + (2E)-geranyl diphosphate = 5-methylaminomethyl-S-(2E)-geranyl-thiouridine(34) in tRNA + diphosphate. It carries out the reaction 5-methylaminomethyl-S-(2E)-geranyl-thiouridine(34) in tRNA + selenophosphate + H(+) = 5-methylaminomethyl-2-(Se-phospho)selenouridine(34) in tRNA + (2E)-thiogeraniol. It catalyses the reaction 5-methylaminomethyl-2-(Se-phospho)selenouridine(34) in tRNA + H2O = 5-methylaminomethyl-2-selenouridine(34) in tRNA + phosphate. Involved in the post-transcriptional modification of the uridine at the wobble position (U34) of tRNA(Lys), tRNA(Glu) and tRNA(Gln). Catalyzes the conversion of 2-thiouridine (S2U-RNA) to 2-selenouridine (Se2U-RNA). Acts in a two-step process involving geranylation of 2-thiouridine (S2U) to S-geranyl-2-thiouridine (geS2U) and subsequent selenation of the latter derivative to 2-selenouridine (Se2U) in the tRNA chain. The sequence is that of tRNA 2-selenouridine synthase from Sulfurovum sp. (strain NBC37-1).